The primary structure comprises 299 residues: Epimerase family protein SERP0438 (299 aa).

This sequence belongs to the NAD(P)-dependent epimerase/dehydratase family. SDR39U1 subfamily.

This chain is Epimerase family protein SERP0438, found in Staphylococcus epidermidis (strain ATCC 35984 / DSM 28319 / BCRC 17069 / CCUG 31568 / BM 3577 / RP62A).